Consider the following 217-residue polypeptide: Twisted gastrulation protein homolog 1-A (217 aa).

Residues Met1–Gly26 form the signal peptide. N-linked (GlcNAc...) asparagine glycans are attached at residues Asn53 and Asn147.

Belongs to the twisted gastrulation protein family.

The protein resides in the secreted. Involved in dorsal-ventral patterning. Appears to function predominantly as a ventralizing factor, through its actions as a BMP signaling agonist, acting through both chd-dependent and chd-independent mechanisms. May also antagonize BMP signaling, probably via formation of ternary complexes with chd and BMPs, resulting in dorsalization. This is Twisted gastrulation protein homolog 1-A (twsg1a) from Danio rerio (Zebrafish).